The primary structure comprises 93 residues: Small ribosomal subunit protein uS19 (93 aa).

The protein belongs to the universal ribosomal protein uS19 family.

Functionally, protein S19 forms a complex with S13 that binds strongly to the 16S ribosomal RNA. In Nitratidesulfovibrio vulgaris (strain DSM 19637 / Miyazaki F) (Desulfovibrio vulgaris), this protein is Small ribosomal subunit protein uS19.